The chain runs to 165 residues: Phosphopantetheine adenylyltransferase (165 aa).

Ser9 is a substrate binding site. ATP-binding positions include 9-10 (SF) and His17. Substrate contacts are provided by Lys41, Leu73, and Lys87. ATP-binding positions include 88–90 (GLR), Glu98, and 122–128 (YSFLSSS).

The protein belongs to the bacterial CoaD family. As to quaternary structure, homohexamer. Mg(2+) serves as cofactor.

The protein resides in the cytoplasm. The catalysed reaction is (R)-4'-phosphopantetheine + ATP + H(+) = 3'-dephospho-CoA + diphosphate. It participates in cofactor biosynthesis; coenzyme A biosynthesis; CoA from (R)-pantothenate: step 4/5. Functionally, reversibly transfers an adenylyl group from ATP to 4'-phosphopantetheine, yielding dephospho-CoA (dPCoA) and pyrophosphate. This Acidothermus cellulolyticus (strain ATCC 43068 / DSM 8971 / 11B) protein is Phosphopantetheine adenylyltransferase.